Here is a 571-residue protein sequence, read N- to C-terminus: Proline--tRNA ligase (571 aa).

The protein belongs to the class-II aminoacyl-tRNA synthetase family. ProS type 1 subfamily. Homodimer.

The protein resides in the cytoplasm. It catalyses the reaction tRNA(Pro) + L-proline + ATP = L-prolyl-tRNA(Pro) + AMP + diphosphate. Functionally, catalyzes the attachment of proline to tRNA(Pro) in a two-step reaction: proline is first activated by ATP to form Pro-AMP and then transferred to the acceptor end of tRNA(Pro). As ProRS can inadvertently accommodate and process non-cognate amino acids such as alanine and cysteine, to avoid such errors it has two additional distinct editing activities against alanine. One activity is designated as 'pretransfer' editing and involves the tRNA(Pro)-independent hydrolysis of activated Ala-AMP. The other activity is designated 'posttransfer' editing and involves deacylation of mischarged Ala-tRNA(Pro). The misacylated Cys-tRNA(Pro) is not edited by ProRS. The protein is Proline--tRNA ligase of Vibrio vulnificus (strain CMCP6).